Here is a 440-residue protein sequence, read N- to C-terminus: Ribosomal protein uS12 methylthiotransferase RimO (440 aa).

Residues 5–116 (PTIAISHLGC…IVSVIERAEQ (112 aa)) enclose the MTTase N-terminal domain. 6 residues coordinate [4Fe-4S] cluster: cysteine 14, cysteine 50, cysteine 79, cysteine 154, cysteine 158, and cysteine 161. The Radical SAM core domain occupies 140–370 (TTTEGVAYLR…ALQQPISWRK (231 aa)). A TRAM domain is found at 372–438 (QQEVGKTVEV…EYDLFGQVVS (67 aa)).

The protein belongs to the methylthiotransferase family. RimO subfamily. [4Fe-4S] cluster serves as cofactor.

It is found in the cytoplasm. The enzyme catalyses L-aspartate(89)-[ribosomal protein uS12]-hydrogen + (sulfur carrier)-SH + AH2 + 2 S-adenosyl-L-methionine = 3-methylsulfanyl-L-aspartate(89)-[ribosomal protein uS12]-hydrogen + (sulfur carrier)-H + 5'-deoxyadenosine + L-methionine + A + S-adenosyl-L-homocysteine + 2 H(+). Catalyzes the methylthiolation of an aspartic acid residue of ribosomal protein uS12. In Nostoc sp. (strain PCC 7120 / SAG 25.82 / UTEX 2576), this protein is Ribosomal protein uS12 methylthiotransferase RimO.